The primary structure comprises 200 residues: Probable nicotinate-nucleotide adenylyltransferase (200 aa).

It belongs to the NadD family.

The enzyme catalyses nicotinate beta-D-ribonucleotide + ATP + H(+) = deamido-NAD(+) + diphosphate. It functions in the pathway cofactor biosynthesis; NAD(+) biosynthesis; deamido-NAD(+) from nicotinate D-ribonucleotide: step 1/1. Functionally, catalyzes the reversible adenylation of nicotinate mononucleotide (NaMN) to nicotinic acid adenine dinucleotide (NaAD). The sequence is that of Probable nicotinate-nucleotide adenylyltransferase from Clostridium botulinum (strain Eklund 17B / Type B).